We begin with the raw amino-acid sequence, 78 residues long: Delta-conotoxin TxVIA (78 aa).

Residues 1–22 (MKLTCMMIVAVLFLTAWTFATA) form the signal peptide. A propeptide spanning residues 23 to 49 (DDPRNGLGNLFSNAHHEMKNPEASKLN) is cleaved from the precursor. 3 disulfides stabilise this stretch: Cys53/Cys68, Cys60/Cys72, and Cys67/Cys77. Met59 is modified (methionine sulfoxide; partial).

It belongs to the conotoxin O1 superfamily. As to expression, expressed by the venom duct.

The protein localises to the secreted. Its function is as follows. Delta-conotoxins bind to site 6 of voltage-gated sodium channels (Nav) and inhibit the inactivation process. Binding of this toxin is strongly calcium-dependent but not voltage-dependent. The binding site is most likely on the extracellular side of the sodium channel. Binds receptor sites on both mollusk and rat central nervous system, but despite its high affinity binding to rat sodium channel, it has no functional effect in vivo and in vitro on it. Also has no effect on Gambusia fish. Is important in mollusk for the paralysis of the prey. Upon injection of the peptide, a subordinate lobster assumes an exaggerated dominant posture (of a 'King-Kong' lobster!). The chain is Delta-conotoxin TxVIA from Conus textile (Cloth-of-gold cone).